Consider the following 392-residue polypeptide: Caveolae-associated protein 1 (392 aa).

Methionine 1 carries the post-translational modification N-acetylmethionine. Basic and acidic residues predominate over residues methionine 1–glutamate 10. A disordered region spans residues methionine 1–leucine 45. Positions methionine 1–lysine 100 are required for homotrimerization and for interaction with CAVIN2 and CAVIN3. Phosphoserine occurs at positions 21 and 38. Residue threonine 40 is modified to Phosphothreonine. Phosphoserine occurs at positions 42 and 48. The tract at residues valine 54–isoleucine 64 is nuclear export signal. The segment at leucine 55–leucine 77 is leucine-zipper 1. Lysine 118 participates in a covalent cross-link: Glycyl lysine isopeptide (Lys-Gly) (interchain with G-Cter in SUMO2). At serine 120 the chain carries Phosphoserine. Lysine 124 is covalently cross-linked (Glycyl lysine isopeptide (Lys-Gly) (interchain with G-Cter in SUMO2)). Residues lysine 138 to lysine 154 are nuclear localization signal. Tyrosine 158 carries the phosphotyrosine modification. Lysine 163 is covalently cross-linked (Glycyl lysine isopeptide (Lys-Gly) (interchain with G-Cter in SUMO1); alternate). Lysine 163 is covalently cross-linked (Glycyl lysine isopeptide (Lys-Gly) (interchain with G-Cter in SUMO2); alternate). A Glycyl lysine isopeptide (Lys-Gly) (interchain with G-Cter in SUMO2) cross-link involves residue lysine 167. Residues leucine 168 to leucine 188 are leucine-zipper 2. Residues serine 169 and serine 171 each carry the phosphoserine modification. A Glycyl lysine isopeptide (Lys-Gly) (interchain with G-Cter in SUMO2) cross-link involves residue lysine 172. Phosphoserine is present on residues serine 173 and serine 177. A compositionally biased stretch (basic and acidic residues) spans serine 173 to lysine 183. Residues serine 173–aspartate 197 form a disordered region. Positions glutamate 184 to aspartate 197 are enriched in acidic residues. Threonine 198 is subject to Phosphothreonine. The stretch at isoleucine 201–valine 284 forms a coiled coil. Residues serine 204 and serine 205 each carry the phosphoserine modification. The nuclear localization signal stretch occupies residues lysine 235 to arginine 251. The tract at residues leucine 259–leucine 299 is leucine-zipper 3. Residue serine 302 is modified to Phosphoserine. The residue at position 304 (threonine 304) is a Phosphothreonine. Position 310 is a phosphotyrosine (tyrosine 310). Lysine 328 is covalently cross-linked (Glycyl lysine isopeptide (Lys-Gly) (interchain with G-Cter in SUMO2)). The tract at residues glycine 347–serine 367 is disordered. 5 positions are modified to phosphoserine: serine 367, serine 368, serine 381, serine 389, and serine 391.

Belongs to the CAVIN family. In terms of assembly, component of the CAVIN complex composed of CAVIN1, CAVIN2, CAVIN3 and CAVIN4. Homotrimer. Interacts with LIPE in the adipocyte cytoplasm. Interacts with RNA polymerase I subunit POLR1A/RPA1. Interacts with TTF1. Binds the 3' end of pre-rRNA. Interacts with transcription factor ZNF148. Interacts with CAV1, CAVIN2 and CAVIN3. Interacts with CAVIN4. In terms of processing, phosphorylated. Present in active and inactive forms. Changes in phosphorylation pattern may alter activity. Phosphorylation at Tyr-158 is essential for its function in the regulation of the ribosomal transcriptional activity. Post-translationally, monoubiquitinated. In terms of tissue distribution, expressed in the heart, stomach, adipose tissue and lung (at protein level). Expressed in testis, kidney, muscle, liver, spleen and brain.

The protein localises to the membrane. It localises to the caveola. The protein resides in the cell membrane. Its subcellular location is the microsome. It is found in the endoplasmic reticulum. The protein localises to the cytoplasm. It localises to the cytosol. The protein resides in the mitochondrion. Its subcellular location is the nucleus. Its function is as follows. Plays an important role in caveolae formation and organization. Essential for the formation of caveolae in all tissues. Core component of the CAVIN complex which is essential for recruitment of the complex to the caveolae in presence of calveolin-1 (CAV1). Essential for normal oligomerization of CAV1. Promotes ribosomal transcriptional activity in response to metabolic challenges in the adipocytes and plays an important role in the formation of the ribosomal transcriptional loop. Dissociates transcription complexes paused by DNA-bound TTF1, thereby releasing both RNA polymerase I and pre-RNA from the template. The caveolae biogenesis pathway is required for the secretion of proteins such as GASK1A. This is Caveolae-associated protein 1 (Cavin1) from Mus musculus (Mouse).